We begin with the raw amino-acid sequence, 1180 residues long: IQ domain-containing protein N (1180 aa).

The disordered stretch occupies residues His34–Arg78. Positions His103 to Ala132 constitute an IQ 1 domain. Disordered regions lie at residues Arg283 to Lys324, Met476 to Arg496, and Gln786 to Gly820. IQ domains are found at residues Arg926 to Val955, Ile956 to Thr978, Ile979 to Pro1001, Gln1113 to Ile1142, and Val1143 to Pro1165.

Interacts with calmodulin.

Functionally, essential for spermiogenesis and fertilization. May be required for manchette assembly in elongating spermatids. This chain is IQ domain-containing protein N, found in Homo sapiens (Human).